Here is a 640-residue protein sequence, read N- to C-terminus: Choline O-acetyltransferase (640 aa).

Residues 1–22 (MPDLEKDMQKKEKDSRSKDEPA) are compositionally biased toward basic and acidic residues. The tract at residues 1-28 (MPDLEKDMQKKEKDSRSKDEPAVPKLPV) is disordered. Histidine 334 serves as the catalytic Proton acceptor. Residues 412–424 (GKEF…TSPD), serine 450, and glutamine 551 contribute to the CoA site.

Belongs to the carnitine/choline acetyltransferase family. In terms of tissue distribution, detected in brain and in embryonic retina.

It catalyses the reaction choline + acetyl-CoA = acetylcholine + CoA. Functionally, catalyzes the reversible synthesis of acetylcholine (ACh) from acetyl CoA and choline at cholinergic synapses. The protein is Choline O-acetyltransferase (CHAT) of Gallus gallus (Chicken).